Reading from the N-terminus, the 166-residue chain is Putative esterase sll0410 (166 aa).

Aspartate 45 is a catalytic residue.

The protein belongs to the 4-hydroxybenzoyl-CoA thioesterase family.

This Synechocystis sp. (strain ATCC 27184 / PCC 6803 / Kazusa) protein is Putative esterase sll0410.